We begin with the raw amino-acid sequence, 353 residues long: Zinc transporter 5 (353 aa).

Positions 1–27 are cleaved as a signal peptide; it reads MATAAMTKVFVLLFLVAACYLPAHAAA. Residues 28 to 48 are Extracellular-facing; sequence AECDCATDTAGRDKAQALRLK. Residues 49–69 form a helical membrane-spanning segment; sequence VIAIFCILAGSTVGAALPSLG. Topologically, residues 70-86 are cytoplasmic; it reads GRFPAIQPETDVFLSVK. A helical membrane pass occupies residues 87–107; that stretch reads AFAGGVILATGLVHILPAAFE. Residues 108–121 lie on the Extracellular side of the membrane; sequence ALSSPCLVGGPWKR. Residues 122–142 traverse the membrane as a helical segment; it reads FPFAGMVAMVSAIGTLIVDTV. The Cytoplasmic segment spans residues 143 to 198; the sequence is ATGYFHRTDAKRKAAAVADEPADDLEASDEHSHGHAHGMSVMSVAPAGEEDLVRHR. The helical transmembrane segment at 199-219 threads the bilayer; that stretch reads VISQVLELGVVVHSLIIGMSL. The Extracellular portion of the chain corresponds to 220 to 230; that stretch reads GASDFPSTVRP. Residues 231–251 form a helical membrane-spanning segment; sequence LVPALTFHQFFEGIGLGGCIV. The Cytoplasmic segment spans residues 252-260; sequence QAKFRVRSV. Residues 261-281 traverse the membrane as a helical segment; it reads VTMALFFSLTTPAGIVVGIGI. The Extracellular segment spans residues 282-292; the sequence is SSVYDANSPTA. The helical transmembrane segment at 293 to 313 threads the bilayer; the sequence is LVVQGLLEAAAAGILVYMALV. The Cytoplasmic segment spans residues 314–332; it reads DILAEDFMKTKVQRRGRLQ. Residues 333 to 353 form a helical membrane-spanning segment; the sequence is LAMNVALLLGAGLMSMIAIWA.

The protein belongs to the ZIP transporter (TC 2.A.5) family.

The protein resides in the cell membrane. Zinc transporter that mediates zinc uptake from the rhizosphere and may be responsible for the translocation of zinc within the plant. This is Zinc transporter 5 (ZIP5) from Oryza sativa subsp. japonica (Rice).